The sequence spans 341 residues: UDP-3-O-acylglucosamine N-acyltransferase (341 aa).

His241 functions as the Proton acceptor in the catalytic mechanism.

This sequence belongs to the transferase hexapeptide repeat family. LpxD subfamily. Homotrimer.

It carries out the reaction a UDP-3-O-[(3R)-3-hydroxyacyl]-alpha-D-glucosamine + a (3R)-hydroxyacyl-[ACP] = a UDP-2-N,3-O-bis[(3R)-3-hydroxyacyl]-alpha-D-glucosamine + holo-[ACP] + H(+). The protein operates within bacterial outer membrane biogenesis; LPS lipid A biosynthesis. In terms of biological role, catalyzes the N-acylation of UDP-3-O-acylglucosamine using 3-hydroxyacyl-ACP as the acyl donor. Is involved in the biosynthesis of lipid A, a phosphorylated glycolipid that anchors the lipopolysaccharide to the outer membrane of the cell. The chain is UDP-3-O-acylglucosamine N-acyltransferase from Saccharophagus degradans (strain 2-40 / ATCC 43961 / DSM 17024).